The primary structure comprises 130 residues: Small ribosomal subunit protein uS9 (130 aa).

The interval 109–130 (RKKERKKYGQRAARARYQYSKR) is disordered.

Belongs to the universal ribosomal protein uS9 family.

The polypeptide is Small ribosomal subunit protein uS9 (Nitratidesulfovibrio vulgaris (strain DSM 19637 / Miyazaki F) (Desulfovibrio vulgaris)).